A 159-amino-acid chain; its full sequence is MNISIISIGKLKEKYLKQGIAEYLKRLSSYAKVEVIELPDEKAPENLSEAEMLIVKEKEGVRILDKISDDTHVIALAIEGKQKSSEQFAESLDCLATYGKSKIAFVIGGSLGLSTEVMKRSNESLSFSKMTLPHQLMRLVLLEQIYRAFRINRGEPYHK.

S-adenosyl-L-methionine-binding positions include Leu-76, Gly-108, and 127–132 (FSKMTL).

Belongs to the RNA methyltransferase RlmH family. Homodimer.

It is found in the cytoplasm. It catalyses the reaction pseudouridine(1915) in 23S rRNA + S-adenosyl-L-methionine = N(3)-methylpseudouridine(1915) in 23S rRNA + S-adenosyl-L-homocysteine + H(+). Its function is as follows. Specifically methylates the pseudouridine at position 1915 (m3Psi1915) in 23S rRNA. The sequence is that of Ribosomal RNA large subunit methyltransferase H from Bacillus cytotoxicus (strain DSM 22905 / CIP 110041 / 391-98 / NVH 391-98).